The sequence spans 213 residues: MSVDANKVKFFFGKNCTGESFEYNKGETVRFNNGDKWNDKFMSCLVGSNVRCNIWEHNEIDTPTPGKFQELAQGSTNNDLTSINGLSKFQVLPGAFQWAVDVKIVNKVNSTAGSYEMTITPYQVDKVACKDGDDFVQLPIPKLTPPDSEIVSHLTVRQTHTPYDYVVNGSVYFKYSPTTGQVTVIKKDETFPKNMTVTQDDNTSFIFNLNSEK.

Repeat copies occupy residues 1-48, 49-97, 98-146, and 147-194. The tract at residues 1-194 is 4 X approximate tandem repeats; sequence MSVDANKVKF…IKKDETFPKN (194 aa).

The protein belongs to the Dictyostelium CAD family. Post-translationally, the N-terminus is blocked.

The protein localises to the cell membrane. Its function is as follows. Mediates calcium-dependent cell-cell adhesion during the early stage of development. The chain is Calcium-dependent cell adhesion molecule 1 (cadA) from Dictyostelium discoideum (Social amoeba).